We begin with the raw amino-acid sequence, 515 residues long: uncharacterized protein (515 aa).

This sequence belongs to the AllF family.

This is an uncharacterized protein from Escherichia coli (strain K12).